The sequence spans 1261 residues: ABC-type transmembrane transporter verA (1261 aa).

Residues 41-61 form a helical membrane-spanning segment; the sequence is IGCAFAAVCSGAAMPLMALIL. Residues 41–334 form the ABC transmembrane type-1 1 domain; that stretch reads IGCAFAAVCS…LGPNMPSFIK (294 aa). N-linked (GlcNAc...) asparagine glycosylation is present at Asn-67. Helical transmembrane passes span 92 to 112, 166 to 186, 190 to 210, 270 to 290, and 308 to 328; these read LWFV…SFGF, LGIM…AFSQ, LTLV…FIVS, FVGL…AIGF, and ILSV…LGPN. The ABC transporter 1 domain occupies 374-618; that stretch reads VELRDMSFAY…GGLYKRLYDA (245 aa). A glycan (N-linked (GlcNAc...) asparagine) is linked at Asn-396. Position 409 to 416 (409 to 416) interacts with ATP; sequence GPSGAGKS. Asn-463 is a glycosylation site (N-linked (GlcNAc...) asparagine). Helical transmembrane passes span 686–706, 734–754, 808–828, 830–850, 913–933, and 950–970; these read YWPI…IFPV, LMFF…GFFM, MGLL…GLAY, WKFA…AGYL, VMTL…ALGF, and FFTV…LFGF. The ABC transmembrane type-1 2 domain maps to 691-976; that stretch reads LIGLVACVVT…LFGFSSNLGK (286 aa). Residues Asn-1007 and Asn-1021 are each glycosylated (N-linked (GlcNAc...) asparagine). Positions 1017–1255 constitute an ABC transporter 2 domain; sequence VDMQNVTFAY…QGNYFKMHES (239 aa). Residue 1052–1059 coordinates ATP; that stretch reads GTSGSGKS. Residue Asn-1106 is glycosylated (N-linked (GlcNAc...) asparagine).

The protein belongs to the ABC transporter superfamily. ABCB family. Multidrug resistance exporter (TC 3.A.1.201) subfamily.

The protein localises to the cell membrane. In terms of biological role, ABC-type transmembrane transporter; part of the gene cluster that mediates the biosynthesis of 11'-deoxyverticillin A, one of the dimeric epipolythiodioxopiperazines (ETPs) from the verticillin family that are toxic secondary metabolites. The verA multidrug transporter is probably involved in the secretion of 11'-deoxyverticillin A. In Clonostachys rogersoniana, this protein is ABC-type transmembrane transporter verA.